Reading from the N-terminus, the 477-residue chain is MLGVRCLLRSVRFCSSAPFPKHKPSAKLSVRDALGAQNASGERIKIQGWIRSVRSQKEVLFLHVNDGSSLESLQVVADSGLDSRELNFGSSVEVQGQLIKSPSKRQNVELKAEKIKVIGNCDAKDFPIKYKERHPLEYLRQYPHFRCRTNVLGSILRIRSEATAAIHSFFKDSGFVHIHTPIITSNDSEGAGELFQLEPSGKLKVPEENFFNVPAFLTVSGQLHLEVMSGAFTQVFTFGPTFRAENSQSRRHLAEFYMIEAEISFVDSLQDLMQVIEELFKATTMMVLSKCPEDVELCHKFIAPGQKDRLEHMLKNNFLIISYTEAVEILKQASQNFTFTPEWGADLRTEHEKYLVKHCGNIPVFVINYPLTLKPFYMRDNEDGPQHTVAAVDLLVPGVGELFGGGLREERYHFLEERLARSGLTEVYQWYLDLRRFGSVPHGGFGMGFERYLQCILGVDNIKDVIPFPRFPHSCLL.

The transit peptide at 1 to 14 (MLGVRCLLRSVRFC) directs the protein to the mitochondrion. N6-acetyllysine is present on Lys-353.

It belongs to the class-II aminoacyl-tRNA synthetase family. In terms of assembly, homodimer.

The protein localises to the mitochondrion matrix. The protein resides in the mitochondrion. It catalyses the reaction tRNA(Asn) + L-asparagine + ATP = L-asparaginyl-tRNA(Asn) + AMP + diphosphate + H(+). Mitochondrial aminoacyl-tRNA synthetase that catalyzes the specific attachment of the asparagine amino acid (aa) to the homologous transfer RNA (tRNA), further participating in protein synthesis. The reaction occurs in a two steps: asparagine is first activated by ATP to form Asn-AMP and then transferred to the acceptor end of tRNA(Asn). In Homo sapiens (Human), this protein is Asparaginyl-tRNA synthetase.